Consider the following 2599-residue polypeptide: MESADALVEEQKLMAEAKYRTYMTNIDKALRNFEYSSEWADLISALGKLSKAISSNTQYQVIPRRLKIAKRLAQCMHPALPSGVHLKALETYSVIFSKTGPERLATEFIYSAGLFPLLGYAAMNVRPALLAIYETYFVPLGDKLRPALSGFLNGVLPGYDCGLDHFERISALLKQVCNAVNPMHFYTVLWESVANNAAIRLPAITYLLEHFNKRLDMQEQIYIMGHNREIMMSALCVCLNDSLILVQRNTLEFLLLGFPMHTVLLSEDDLVKLVTNGLNTILRRDMSLNRRLFSWLLGSEVAKNSPTYDTLSLDTSNAPLEEEPEPYFVKHSRHILIKALITTLRLSLECAPMDLKPYRIMLSLLDKAEIGSAVLDYVLHDIIRAMYISSGNAEALKSANLLFATFDPAYIWSYMTNMFEKACQQANSMQEKSQAGETSGKYACDVGSGDPCVLEICVLTEFLLETVSLEMYTETTRVYLPKVFLAITQLLSLHMDHISSNEITASLKLCMKIVSRVQPMITSPIKLNKLIEQSGGSSSDEKITMNSASDAGKTEAGAQGNSLEKSKSDSRLNQFAENTLHSADPNDEELIHRSASNQSVGRQSPNKKKAKSISRLSELDKDISASDTGQQSSSDLDTPRSIKKLKAKAKVPFIRSPKKQRPKDMVLIQSNTSAEVSDGPSAEEPKSAPPDQTPQFQLDEESRATQQRGFSILEKCIRQYEIFFEVYLSRKLLHIESEPKECSVKVQLQRTTSTIHTSNLFMAEQVLDHECPVRESQIERLFNLLRVDIVPRSKQLQRLLNRSLPLPASASELSSDSEAQEEKQQSLLIDGQTQRSVQQLAELQLSPSLRGAVKLAATLLVEMSTFPNCNKHVVLDKNEPELPNWLKVLCLVACFAQSDKELQVASITTLFDLISLLRSQIEHTTSPGVTFVVMLPLLKFGHVSYMEQHTRVFQLVSSILWDYLGTAGIDPAQIAALLHQLHSCLESGLVETVIGNRMQSQHLLQMQSQSRSDLGKAAIRNFQMERLAEAQLLCPTESTERLRESQARSFKKFELLWHLGRDKQTARGFEKTLLKVLDTLALPHYMSERTFVTNWLQASLLRGDLARLTKPLYKILLSASSKRVGIVHMQQLYRESETEVTPAFERDVYAISSEQGNVKYHHMETSSGNKKKSPIRNFPKKIFGVTLSGGKANKVSNFVSDKSTVATCSEATQDMNTIGLIINPLENANDFDDETDLEEPRIEIPHKETPLEQKLASAMDESEQPSQEQPANQPDNSLQYDQDITDHSDSSDFESDSELRETSIEKEDSITVSSSAGVSDDVKRFVGDCESVTDALTQHEKIKSRKTYRLTREKTPGENSLNSLEQKDHDSISELQADALPADEYFREDKKLGKRKKVLTSGEKKRLSCISKTSTDSNISGSHVEQPEQEEETEPGTESTINVEDKRRNLSLETSKLQPDMQKTLEKGKQNVEILRQNNAAAAAAAAAAAEEQISVRSSMKSTVSLTDAAHLYHNHLLIYLAIYDTRQTLYALQTLRNIICCDKRTFLCLSITTSFSSASLKQLLVRHRKSISGKGFDGSVGNSEYAQGYRGCMQLELLVTLCLFYARGYFQKESLDAQRQSPTLQDIVNNRRIQLESIELLTLICSELIEIVKGMGRGLANYIADLLARAKLQKVMLHCLNSSVCSYGLKGNTNSGSYAEQVLSFNDPQDDQLHADCFQLQLLRLLLAVIRLEHEVHQLRQDTPPAAGEDSAGNASPTRLAEGATANVKYLPNCLISQQPMFLAAVLGALQQERLRHLHRNWTDLVTSSLNCFSFGSLTNIVISVVHQLCSNLDRISKMGLPQQRHFPPDYVVSQLEALTILCHYCLLDNTQQTALSHLFNQAYPQTSSSAQSSSTGQLLNSIVHSFLSASESSTSAPAPRNPQLQAARNAVLSHLPRIMSSVAAIWDSELGQLRPVRQQLLEFLSPVSLHHGSNFLAAVAVTWQQRGIATNMNGLSIAEQFQRNSVLQACPAQLSLVSLVSSIRVMPMDSFVMTLHHVVRSPPPIHRPPAQLSIEVSALELFYFYMKSAPAPQLADAWSSLLALIRDGLNLTPPAQFALLMLLNEFVQRCPQMPFQDKKEVRELHDVTSRLVDSLSSVAGSCLEQTTWLRRNLAVKEDTDGLAKDNSVGGGGLQQYSLQAQSVLAAILSNLLDVAYGSQEKDKVVNIVTPLLYNITPYLKNHTARNVPFFYACSALLASLSGYQYTRKAWRKDMLDLLLDNAFFQMHLSCLPFWRMIMDSLMTYDNTTFRELMTRVSLSQAGSLNIFTSRDQEYEQRAMLLKRLAFVIYCSEFDQHNKYMPDIQEQLANSLRLVPMGPSVQAAVFLCFRVLLLRMSPDHVTSLWPIIIAEMVQVFLQMEQELKSESEERNQQLRLPSGIDVSWSAASGASNGYNSQTPMQHWRSVQLEACKLLELGCVLPATKLPHFQMYRWAFVGTEFDVHEEEVCLPNGSLENLATLPSALYVPHVRRVARLMDMKYTSQSPILQRPSNRHLMLHFQQLQSLQELYAFFTTLGISCPQPRNFADTENDVANCLKEIEEVLANDFLEKLPSITTPR.

Disordered regions lie at residues 532–571 (EQSG…SDSR) and 595–701 (ASNQ…LDEE). 3 stretches are compositionally biased toward polar residues: residues 534–549 (SGGS…NSAS), 595–604 (ASNQSVGRQS), and 625–636 (ASDTGQQSSSDL). A Phosphoserine modification is found at Ser753. Over residues 1240 to 1251 (PRIEIPHKETPL) the composition is skewed to basic and acidic residues. Disordered regions lie at residues 1240-1316 (PRIE…SSSA) and 1347-1368 (TYRL…EQKD). Residues 1264–1282 (QPSQEQPANQPDNSLQYDQ) show a composition bias toward polar residues. The span at 1297-1309 (SELRETSIEKEDS) shows a compositional bias: basic and acidic residues. Position 1355 is a phosphothreonine (Thr1355). Phosphoserine occurs at positions 1360, 1363, and 1371. The interval 1409–1442 (CISKTSTDSNISGSHVEQPEQEEETEPGTESTIN) is disordered. Polar residues predominate over residues 1410–1423 (ISKTSTDSNISGSH). Ser2525 bears the Phosphoserine mark.

It belongs to the DOP1 family.

It localises to the golgi apparatus membrane. Functionally, may be involved in protein traffic between late Golgi and early endosomes. The polypeptide is Protein DOP1 homolog (Drosophila melanogaster (Fruit fly)).